A 582-amino-acid chain; its full sequence is Vesicular glutamate transporter 2 (582 aa).

Residues 1 to 71 (MESVKQRILA…CTCFGLPRRY (71 aa)) are Cytoplasmic-facing. Residues 72-92 (IIAIMSGLGFCISFGIRCNLG) form a helical membrane-spanning segment. At 93-125 (VAIVDMVNNSTIHRGGKVIKEKAKFNWDPETVG) the chain is on the vesicular side. N-linked (GlcNAc...) asparagine glycosylation is found at N100 and N101. A helical transmembrane segment spans residues 126 to 146 (MIHGSFFWGYIITQIPGGYIA). The Cytoplasmic segment spans residues 147–148 (SR). The chain crosses the membrane as a helical span at residues 149–169 (LAANRVFGAAILLTSTLNMLI). Residues 170-177 (PSAARVHY) lie on the Vesicular side of the membrane. The helical transmembrane segment at 178–198 (GCVIFVRILQGLVEGVTYPAC) threads the bilayer. The Cytoplasmic segment spans residues 199-216 (HGIWSKWAPPLERSRLAT). A helical transmembrane segment spans residues 217 to 237 (TSFCGSYAGAVIAMPLAGILV). Over 238-244 (QYTGWSS) the chain is Vesicular. The helical transmembrane segment at 245–265 (VFYVYGSFGMVWYMFWLLVSY) threads the bilayer. Residues 266 to 310 (ESPAKHPTITDEERRYIEESIGESANLLGAMEKFKTPWRKFFTSM) are Cytoplasmic-facing. Residues 311–331 (PVYAIIVANFCRSWTFYLLLI) traverse the membrane as a helical segment. At 332 to 349 (SQPAYFEEVFGFEISKVG) the chain is on the vesicular side. A helical transmembrane segment spans residues 350 to 370 (MLSAVPHLVMTIIVPIGGQIA). The Cytoplasmic portion of the chain corresponds to 371-386 (DFLRSKQILSTTTVRK). A helical transmembrane segment spans residues 387–407 (IMNCGGFGMEATLLLVVGYSH). Residues 408 to 409 (TR) lie on the Vesicular side of the membrane. Residues 410–430 (GVAISFLVLAVGFSGFAISGF) traverse the membrane as a helical segment. Topologically, residues 431 to 443 (NVNHLDIAPRYAS) are cytoplasmic. A helical membrane pass occupies residues 444–464 (ILMGISNGVGTLSGMVCPIIV). At 465 to 477 (GAMTKNKSREEWQ) the chain is on the vesicular side. Residue N470 is glycosylated (N-linked (GlcNAc...) asparagine). A helical transmembrane segment spans residues 478–498 (YVFLIAALVHYGGVIFYAIFA). The Cytoplasmic portion of the chain corresponds to 499-582 (SGEKQPWADP…HSYKDRVDYS (84 aa)).

Belongs to the major facilitator superfamily. Sodium/anion cotransporter family. VGLUT subfamily. In terms of tissue distribution, predominantly expressed in adult brain. Expressed in amygdala, caudate nucleus, cerebral cortex, frontal lobe, hippocampus, medulla, occipital lobe, putamen, spinal cord, substantia nigra, subthalamic nucleus, temporal lobe and thalamus.

It localises to the cytoplasmic vesicle. The protein localises to the secretory vesicle. The protein resides in the synaptic vesicle membrane. Its subcellular location is the synapse. It is found in the synaptosome. It localises to the cell membrane. The enzyme catalyses L-glutamate(out) = L-glutamate(in). The catalysed reaction is 3 Na(+)(out) + phosphate(out) = 3 Na(+)(in) + phosphate(in). It catalyses the reaction phosphate(in) = phosphate(out). It carries out the reaction K(+)(in) + H(+)(out) = K(+)(out) + H(+)(in). The enzyme catalyses chloride(in) = chloride(out). Its activity is regulated as follows. Chloride channel activity is allosterically activated by lumenal H(+) and Cl(-) leading to synaptic vesicles acidification. The L-glutamate transport activity is allosterically activated by lumenal H(+) and Cl(-). The allosteric requirement for H(+) efficiently prevents non-vesicular efflux across the plasma membrane. The L-glutamate uniporter activity exhibits a biphasic dependence on chloride concentration. Functionally, multifunctional transporter that transports L-glutamate as well as multiple ions such as chloride, proton, potassium, sodium and phosphate. At the synaptic vesicle membrane, mainly functions as a uniporter which transports preferentially L-glutamate but also, phosphate from the cytoplasm into synaptic vesicles at presynaptic nerve terminals of excitatory neural cells. The L-glutamate or phosphate uniporter activity is electrogenic and is driven by the proton electrochemical gradient, mainly by the electrical gradient established by the vacuolar H(+)-ATPase across the synaptic vesicle membrane. In addition, functions as a chloride channel that allows the chloride permeation through the synaptic vesicle membrane therefore affects the proton electrochemical gradient and promotes synaptic vesicles acidification. Moreover, functions as a vesicular K(+)/H(+) antiport allowing to maintain the electrical gradient and to decrease chemical gradient and therefore sustain vesicular glutamate uptake. The vesicular H(+)/H(+) antiport activity is electroneutral. At the plasma membrane, following exocytosis, functions as a symporter of Na(+) and phosphate from the extracellular space to the cytoplasm allowing synaptic phosphate homeostasis regulation. The symporter activity is driven by an inside negative membrane potential and is electrogenic. Also involved in the regulation of retinal hyaloid vessel regression during postnatal development. May also play a role in the endocrine glutamatergic system of other tissues such as pineal gland and pancreas. The polypeptide is Vesicular glutamate transporter 2 (Homo sapiens (Human)).